A 403-amino-acid polypeptide reads, in one-letter code: Putative F-box protein At5g41500 (403 aa).

The 46-residue stretch at 2 to 47 (ATTISNLPRELIEEILSRVPLRAMKAMRLTCKSWNNLSKSESFMKM) folds into the F-box domain.

This chain is Putative F-box protein At5g41500, found in Arabidopsis thaliana (Mouse-ear cress).